We begin with the raw amino-acid sequence, 547 residues long: Puff-specific protein Bx42 (547 aa).

The segment at 177-343 (AQYIRYTPSQ…AREERAGLRN (167 aa)) is SNW. Ser227 and Ser235 each carry phosphoserine. Disordered regions lie at residues 333 to 398 (RARE…ERDI) and 486 to 547 (QFSG…SKRD). Composition is skewed to basic and acidic residues over residues 358–398 (EVRE…ERDI) and 526–539 (KRAE…SSHS).

The protein belongs to the SNW family.

Its subcellular location is the nucleus. May play a role in chromatin structure and function. The chain is Puff-specific protein Bx42 (Bx42) from Drosophila melanogaster (Fruit fly).